The primary structure comprises 208 residues: Claudin-like protein ZF-A89 (208 aa).

The next 4 membrane-spanning stretches (helical) occupy residues 8 to 28, 82 to 102, 117 to 137, and 160 to 180; these read LLAT…CALP, ALVV…IAGG, VVVA…IPVC, and LGAS…GGAL.

This sequence belongs to the claudin family.

It localises to the cell membrane. It is found in the cell junction. Its subcellular location is the tight junction. In terms of biological role, component of tight junction (TJ) strands. The chain is Claudin-like protein ZF-A89 (cldnd) from Danio rerio (Zebrafish).